The sequence spans 474 residues: Aspartate ammonia-lyase (474 aa).

Residues Thr105, Ser144, Thr145, Asn146, and Thr191 each coordinate L-aspartate. The interval 322 to 331 is SS loop; the sequence is GSSIMPGKVN. The active-site Proton acceptor is the Ser323. L-aspartate is bound by residues Ser324 and Lys329.

It belongs to the class-II fumarase/aspartase family. Aspartase subfamily. Homotetramer.

It catalyses the reaction L-aspartate = fumarate + NH4(+). Functionally, lyase involved in the degradation of canavanine, the delta-oxa-analog of arginine, allowing growth on canavanine as sole nitrogen and carbon source. Probably catalyzes the conversion of L-aspartate to fumarate and ammonia. The polypeptide is Aspartate ammonia-lyase (Pseudomonas canavaninivorans).